We begin with the raw amino-acid sequence, 704 residues long: Boron transporter 1 (704 aa).

At 1–35 the chain is on the cytoplasmic side; sequence MEETFVPFEGIKNDLKGRLMCYKQDWTGGFKAGFR. The chain crosses the membrane as a helical span at residues 36–56; sequence ILAPTTYIFFASAIPVISFGE. Residues 57–75 lie on the Extracellular side of the membrane; that stretch reads QLERSTDGVLTAVQTLAST. A helical membrane pass occupies residues 76 to 96; the sequence is AICGMIHSIIGGQPLLILGVA. Residues 97 to 120 are Cytoplasmic-facing; the sequence is EPTVIMYTFMFNFAKARPELGRDL. A helical membrane pass occupies residues 121–141; sequence FLAWSGWVCVWTALMLFVLAI. Over 142–155 the chain is Extracellular; that stretch reads CGACSIINRFTRVA. Residues 156–176 form a helical membrane-spanning segment; it reads GELFGLLIAMLFMQQAIKGLV. Residues 177-195 lie on the Cytoplasmic side of the membrane; sequence DEFRIPERENQKLKEFLPS. Residues 196–216 form a helical membrane-spanning segment; the sequence is WRFANGMFALVLSFGLLLTGL. Topologically, residues 217 to 233 are extracellular; it reads RSRKARSWRYGTGWLRS. The helical transmembrane segment at 234–254 threads the bilayer; the sequence is LIADYGVPLMVLVWTGVSYIP. Over 255 to 289 the chain is Cytoplasmic; it reads AGDVPKGIPRRLFSPNPWSPGAYGNWTVVKEMLDV. A helical transmembrane segment spans residues 290–310; it reads PIVYIIGAFIPASMIAVLYYF. Over 311-337 the chain is Extracellular; the sequence is DHSVASQLAQQKEFNLRKPSSYHYDLL. A helical membrane pass occupies residues 338 to 358; sequence LLGFLTLMCGLLGVPPSNGVI. Topologically, residues 359 to 480 are cytoplasmic; sequence PQSPMHTKSL…STMVGGCVAA (122 aa). A helical transmembrane segment spans residues 481–501; that stretch reads MPILKMIPTSVLWGYFAFMAI. Residues 502-557 lie on the Extracellular side of the membrane; it reads ESLPGNQFWERILLLFTAPSRRFKVLEDYHATFVETVPFKTIAMFTLFQTTYLLIC. The helical transmembrane segment at 558-578 threads the bilayer; that stretch reads FGLTWIPIAGVMFPLMIMFLI. Residues 579–704 lie on the Cytoplasmic side of the membrane; that stretch reads PVRQYLLPRF…RSPLNQSSSN (126 aa). The disordered stretch occupies residues 641–704; it reads EFRHTSSPKV…RSPLNQSSSN (64 aa). A compositionally biased stretch (low complexity) spans 647–664; the sequence is SPKVTSSSSTPVNNRSLS.

It belongs to the anion exchanger (TC 2.A.31.3) family. As to expression, expressed in proximal side of various root cells, notably in the columella, lateral root cap, epidermis and endodermis in tip and elongation zones of the root. Also detected in the epidermis, cortex, endodermis, and stele cells of the root hair zone. Observed in cotyledons and hypocotyls.

The protein localises to the cell membrane. Its subcellular location is the endosome membrane. The protein resides in the vacuole membrane. Efflux-type boron (B) transporter for xylem loading, responsive of boron translocation from roots to shoots under boron limitation. Boron is essential for maintaining the integrity of plants cell walls. The sequence is that of Boron transporter 1 from Arabidopsis thaliana (Mouse-ear cress).